The primary structure comprises 176 residues: Crossover junction endodeoxyribonuclease RuvC (176 aa).

Catalysis depends on residues D10, E69, and D141. 3 residues coordinate Mg(2+): D10, E69, and D141.

It belongs to the RuvC family. In terms of assembly, homodimer which binds Holliday junction (HJ) DNA. The HJ becomes 2-fold symmetrical on binding to RuvC with unstacked arms; it has a different conformation from HJ DNA in complex with RuvA. In the full resolvosome a probable DNA-RuvA(4)-RuvB(12)-RuvC(2) complex forms which resolves the HJ. Requires Mg(2+) as cofactor.

It is found in the cytoplasm. It carries out the reaction Endonucleolytic cleavage at a junction such as a reciprocal single-stranded crossover between two homologous DNA duplexes (Holliday junction).. Functionally, the RuvA-RuvB-RuvC complex processes Holliday junction (HJ) DNA during genetic recombination and DNA repair. Endonuclease that resolves HJ intermediates. Cleaves cruciform DNA by making single-stranded nicks across the HJ at symmetrical positions within the homologous arms, yielding a 5'-phosphate and a 3'-hydroxyl group; requires a central core of homology in the junction. The consensus cleavage sequence is 5'-(A/T)TT(C/G)-3'. Cleavage occurs on the 3'-side of the TT dinucleotide at the point of strand exchange. HJ branch migration catalyzed by RuvA-RuvB allows RuvC to scan DNA until it finds its consensus sequence, where it cleaves and resolves the cruciform DNA. The polypeptide is Crossover junction endodeoxyribonuclease RuvC (Dichelobacter nodosus (strain VCS1703A)).